The primary structure comprises 342 residues: Dof zinc finger protein DOF4.6 (342 aa).

A disordered region spans residues 21–54; it reads NTCPKPQPQPLQPQQPPSVGGERKARPEKDQAVN. The segment covering 25-36 has biased composition (pro residues); that stretch reads KPQPQPLQPQQP. Residues 41-51 show a composition bias toward basic and acidic residues; the sequence is GERKARPEKDQ. Residues 53 to 107 form a Dof-type zinc finger; sequence VNCPRCNSTNTKFCYYNNYSLTQPRYFCKGCRRYWTEGGSLRNIPVGGGSRKNKR. Zn(2+) is bound by residues C55, C58, C80, and C83. The tract at residues 94–136 is disordered; the sequence is RNIPVGGGSRKNKRSHSSSSDISNNHSDSTQPATKKHLSDHHH. The span at 110–122 shows a compositional bias: low complexity; it reads SSSSDISNNHSDS. Basic residues predominate over residues 127-136; sequence TKKHLSDHHH.

As to expression, accumulates in the stele.

Its subcellular location is the nucleus. Its function is as follows. Transcription factor that binds specifically to a 5'-AA[AG]G-3' consensus core sequence. The sequence is that of Dof zinc finger protein DOF4.6 from Arabidopsis thaliana (Mouse-ear cress).